The chain runs to 375 residues: ATP-sensitive inward rectifier potassium channel 15 (375 aa).

Topologically, residues 1 to 60 are cytoplasmic; sequence MDAIHIGMSSTPLVKHTAGAGLKANRPRVMSKSGHSNVRIDKVDGIYLLYLQDLWTTVID. Residues 61 to 87 form a helical membrane-spanning segment; that stretch reads MKWRYKLTLFAATFVMTWFLFGVIYYA. The Extracellular segment spans residues 88 to 113; sequence IAFIHGDLEPGEPISNHTPCIMKVDS. Positions 114–130 form an intramembrane region, helical; Pore-forming; sequence LTGAFLFSLESQTTIGY. The Selectivity filter motif lies at 127-132; that stretch reads TIGYGV. Residues 131–139 are Extracellular-facing; sequence GVRSITEEC. The chain crosses the membrane as a helical span at residues 140–165; the sequence is PHAIFLLVAQLVITTLIEIFITGTFL. Residues 166-375 lie on the Cytoplasmic side of the membrane; the sequence is AKIARPKKRA…RTLLLQQSNV (210 aa).

The protein belongs to the inward rectifier-type potassium channel (TC 1.A.2.1) family. KCNJ15 subfamily. In terms of assembly, can form heteromultimeric channels with Kir5.1/KCNJ16. Interacts with PATJ.

It is found in the membrane. Its subcellular location is the cell membrane. The catalysed reaction is K(+)(in) = K(+)(out). Its activity is regulated as follows. Channel activity is regulated by variations of cytosolic pH; reversibly inhibited by acidic pH values. Inhibited by Ba(2+) and Cs(+) in a voltage-dependent manner. Its function is as follows. Inward rectifier potassium channels are characterized by a greater tendency to allow potassium to flow into the cell rather than out of it. Their voltage dependence is regulated by the concentration of extracellular potassium; as external potassium is raised, the voltage range of the channel opening shifts to more positive voltages. The inward rectification is mainly due to the blockage of outward current by internal magnesium. This chain is ATP-sensitive inward rectifier potassium channel 15 (KCNJ15), found in Homo sapiens (Human).